Consider the following 358-residue polypeptide: MAINTDTSGKQKALTMVLNQIERSFGKGAIMRLGDATRMRVETISTGALTLDLALGGGLPKGRVIEIYGPESSGKTTVALHAIAEVQKEGGIAAFVDAEHALDPTYASALGVDIQNLLVSQPDTGESALEIVDQLVRSAAVDIVVIDSVAALVPRAEIEGDMGDAHVGLQARLMSQALRKITGNIGKSGCTVIFINQLRQKIGVTYGSPETTTGGNALKFYASVRLDIRRIQTLKKGTDEFGNRVKVKVAKNKVAPPFRIAEFDIIFGKGVSTLGCLVDLAEETGILLRKGAWYSYNGDNISQGRDNAIKYLEEKPEFAEQIKQQVREKLDKGAVVSANSVAKANEEDEEDVDLDEEE.

Position 69–76 (69–76 (GPESSGKT)) interacts with ATP.

Belongs to the RecA family.

The protein localises to the cytoplasm. Its function is as follows. Can catalyze the hydrolysis of ATP in the presence of single-stranded DNA, the ATP-dependent uptake of single-stranded DNA by duplex DNA, and the ATP-dependent hybridization of homologous single-stranded DNAs. It interacts with LexA causing its activation and leading to its autocatalytic cleavage. The polypeptide is Protein RecA (Trichormus variabilis (strain ATCC 29413 / PCC 7937) (Anabaena variabilis)).